The following is a 327-amino-acid chain: Glycerol-3-phosphate dehydrogenase [NAD(P)+] (327 aa).

3 residues coordinate NADPH: Trp16, Arg36, and Lys108. Residues Lys108, Gly136, and Ser138 each coordinate sn-glycerol 3-phosphate. Residue Ala140 coordinates NADPH. Residues Lys191, Asp244, Ser254, Arg255, and Asn256 each coordinate sn-glycerol 3-phosphate. Lys191 (proton acceptor) is an active-site residue. Residue Arg255 coordinates NADPH. NADPH contacts are provided by Leu274 and Glu276.

This sequence belongs to the NAD-dependent glycerol-3-phosphate dehydrogenase family.

It is found in the cytoplasm. The enzyme catalyses sn-glycerol 3-phosphate + NAD(+) = dihydroxyacetone phosphate + NADH + H(+). It catalyses the reaction sn-glycerol 3-phosphate + NADP(+) = dihydroxyacetone phosphate + NADPH + H(+). Its pathway is membrane lipid metabolism; glycerophospholipid metabolism. Catalyzes the reduction of the glycolytic intermediate dihydroxyacetone phosphate (DHAP) to sn-glycerol 3-phosphate (G3P), the key precursor for phospholipid synthesis. The chain is Glycerol-3-phosphate dehydrogenase [NAD(P)+] from Bradyrhizobium sp. (strain ORS 278).